We begin with the raw amino-acid sequence, 220 residues long: MDLKQIAGEYAATFVKDGMKIGLGTGSTAYWTIQKLGQRVKEGLSIQAVPTSKETEALAQQLNIPLISLNDVQSLDLTIDGADEIDSNLQLIKGGGGALLREKIVASSSKELIIIVDESKVVTRLGTFPLPIEIIPFAWKQTESKIQSLGCQTTLRLKNNETFITDNNNMIIDCIFPNHIPTPSDLHKRLKMITGVVETGLFVNMTSKAIIGTKNGIQEL.

Substrate-binding positions include 25–28 (TGST), 80–83 (DGAD), and 93–96 (KGGG). The active-site Proton acceptor is the glutamate 102. A substrate-binding site is contributed by lysine 120.

This sequence belongs to the ribose 5-phosphate isomerase family. As to quaternary structure, homodimer.

It carries out the reaction aldehydo-D-ribose 5-phosphate = D-ribulose 5-phosphate. Its pathway is carbohydrate degradation; pentose phosphate pathway; D-ribose 5-phosphate from D-ribulose 5-phosphate (non-oxidative stage): step 1/1. Its function is as follows. Catalyzes the reversible conversion of ribose-5-phosphate to ribulose 5-phosphate. This Bacillus anthracis protein is Ribose-5-phosphate isomerase A.